The sequence spans 2118 residues: Separin (2118 aa).

Residue serine 1121 is modified to Phosphoserine. Over residues 1309–1318 (KCSGRGRRRI) the composition is skewed to basic residues. Positions 1309-1352 (KCSGRGRRRIASVPPPLHNSSQKGLEEEGPPCTPKPPGRARQAG) are disordered. Phosphoserine occurs at positions 1391 and 1394. The segment at 1408–1428 (EEPKRRGTASRTRGQTRKGRS) is disordered. Serine 1504 bears the Phosphoserine mark. The Peptidase C50 domain maps to 1941–2036 (PQNTFYVLNP…SAALAVHGNL (96 aa)). Cysteine 2025 is an active-site residue.

In terms of assembly, interacts with PTTG1. Interacts with RAD21. Autocleaves. This function, which is not essential for its protease activity, is unknown. In terms of processing, phosphorylated by CDK1. There is 8 Ser/Thr phosphorylation sites. Among them, only Ser-1121 phosphorylation is the major site, which conducts to the enzyme inactivation.

The protein localises to the cytoplasm. It is found in the nucleus. It carries out the reaction All bonds known to be hydrolyzed by this endopeptidase have arginine in P1 and an acidic residue in P4. P6 is often occupied by an acidic residue or by a hydroxy-amino-acid residue, the phosphorylation of which enhances cleavage.. Its activity is regulated as follows. Regulated by at least two independent mechanisms. First, it is inactivated via its interaction with securin/PTTG1, which probably covers its active site. The association with PTTG1 is not only inhibitory, since PTTG1 is also required for activating it, the enzyme being inactive in cells in which PTTG1 is absent. PTTG1 degradation at anaphase, liberates it and triggers RAD21 cleavage. Second, phosphorylation at Ser-1121 inactivates it. The complete phosphorylation during mitosis, is removed when cells undergo anaphase. Activation of the enzyme at the metaphase-anaphase transition probably requires the removal of both securin and inhibitory phosphate. Functionally, caspase-like protease, which plays a central role in the chromosome segregation by cleaving the SCC1/RAD21 subunit of the cohesin complex at the onset of anaphase. During most of the cell cycle, it is inactivated by different mechanisms. The protein is Separin (Espl1) of Mus musculus (Mouse).